The primary structure comprises 72 residues: Cytochrome c oxidase subunit 8C, mitochondrial (72 aa).

Residues 1-29 (MSRLLQFCSSLLRHRVVLFSKPGHSGRLS) constitute a mitochondrion transit peptide. The Mitochondrial matrix portion of the chain corresponds to 30–40 (HSESPQNQVLT). A helical transmembrane segment spans residues 41 to 64 (PTESVVGIVVFFATFFIPAAYVMS). At 65–72 (NLKFFKGE) the chain is on the mitochondrial intermembrane side.

The protein belongs to the cytochrome c oxidase VIII family. As to quaternary structure, component of the cytochrome c oxidase (complex IV, CIV), a multisubunit enzyme composed of 14 subunits. The complex is composed of a catalytic core of 3 subunits MT-CO1, MT-CO2 and MT-CO3, encoded in the mitochondrial DNA, and 11 supernumerary subunits COX4I, COX5A, COX5B, COX6A, COX6B, COX6C, COX7A, COX7B, COX7C, COX8 and NDUFA4, which are encoded in the nuclear genome. The complex exists as a monomer or a dimer and forms supercomplexes (SCs) in the inner mitochondrial membrane with NADH-ubiquinone oxidoreductase (complex I, CI) and ubiquinol-cytochrome c oxidoreductase (cytochrome b-c1 complex, complex III, CIII), resulting in different assemblies (supercomplex SCI(1)III(2)IV(1) and megacomplex MCI(2)III(2)IV(2)).

Its subcellular location is the mitochondrion inner membrane. It functions in the pathway energy metabolism; oxidative phosphorylation. Component of the cytochrome c oxidase, the last enzyme in the mitochondrial electron transport chain which drives oxidative phosphorylation. The respiratory chain contains 3 multisubunit complexes succinate dehydrogenase (complex II, CII), ubiquinol-cytochrome c oxidoreductase (cytochrome b-c1 complex, complex III, CIII) and cytochrome c oxidase (complex IV, CIV), that cooperate to transfer electrons derived from NADH and succinate to molecular oxygen, creating an electrochemical gradient over the inner membrane that drives transmembrane transport and the ATP synthase. Cytochrome c oxidase is the component of the respiratory chain that catalyzes the reduction of oxygen to water. Electrons originating from reduced cytochrome c in the intermembrane space (IMS) are transferred via the dinuclear copper A center (CU(A)) of subunit 2 and heme A of subunit 1 to the active site in subunit 1, a binuclear center (BNC) formed by heme A3 and copper B (CU(B)). The BNC reduces molecular oxygen to 2 water molecules using 4 electrons from cytochrome c in the IMS and 4 protons from the mitochondrial matrix. This is Cytochrome c oxidase subunit 8C, mitochondrial (Cox8c) from Rattus norvegicus (Rat).